A 358-amino-acid polypeptide reads, in one-letter code: Endo-1,4-beta-xylanase B (358 aa).

The first 17 residues, 1–17, serve as a signal peptide directing secretion; the sequence is MRFSASLLLALTGSAAA. A GH10 domain is found at 40–352; sequence QGLDAAMKAA…KAAYNAFLRG (313 aa). N-linked (GlcNAc...) asparagine glycosylation occurs at asparagine 136. The Proton donor role is filled by glutamate 166. Glutamate 274 functions as the Nucleophile in the catalytic mechanism.

Belongs to the glycosyl hydrolase 10 (cellulase F) family.

The protein localises to the secreted. It carries out the reaction Endohydrolysis of (1-&gt;4)-beta-D-xylosidic linkages in xylans.. The protein operates within glycan degradation; xylan degradation. Its activity is regulated as follows. Partial inhibition of activity is detected in the presence of Ag(+), Cu2(+) and SDS. Like most fungal xylanases, activity is completely inhibited by Hg(2+) since Hg(2+) could interact with tryptophan residues and oxidize the indole ring. Beta-mercaptoethanol enhances the enzymatic activity by counteracting the oxidation effects of the S-S linkage between cysteine residues. Its function is as follows. Endo-1,4-beta-xylanase involved in the hydrolysis of xylan, a major structural heterogeneous polysaccharide found in plant biomass representing the second most abundant polysaccharide in the biosphere, after cellulose. Is more active on soluble wheat arabinoxylan (defined as 100%) than on birchwood xylan (75.4%) and beechwood xylan (70.8%), and less active on insoluble wheat arabinoxylan (17.4%). Xylose is the major hydrolysis product of XynB. In Humicola insolens (Soft-rot fungus), this protein is Endo-1,4-beta-xylanase B.